The following is a 178-amino-acid chain: RNA pyrophosphohydrolase (178 aa).

Residues 18-171 (PYRPCVGLMV…KRKVYEQVVA (154 aa)) form the Nudix hydrolase domain. Residues 59–80 (GGIDKGEDPAQAALRELYEETG) carry the Nudix box motif.

Belongs to the Nudix hydrolase family. RppH subfamily. Requires a divalent metal cation as cofactor.

In terms of biological role, accelerates the degradation of transcripts by removing pyrophosphate from the 5'-end of triphosphorylated RNA, leading to a more labile monophosphorylated state that can stimulate subsequent ribonuclease cleavage. The protein is RNA pyrophosphohydrolase of Brucella abortus (strain 2308).